The chain runs to 152 residues: Large ribosomal subunit protein bL9 (152 aa).

This sequence belongs to the bacterial ribosomal protein bL9 family.

Its function is as follows. Binds to the 23S rRNA. The sequence is that of Large ribosomal subunit protein bL9 from Synechococcus sp. (strain WH7803).